Consider the following 318-residue polypeptide: Thymidylate synthase (318 aa).

DUMP is bound by residues Arg25 and 180–181 (RR). The Nucleophile role is filled by Cys200. DUMP is bound by residues 220 to 223 (RSGD), Asn231, and 261 to 263 (HIY). Residue Asp223 participates in (6R)-5,10-methylene-5,6,7,8-tetrahydrofolate binding. Ala317 contributes to the (6R)-5,10-methylene-5,6,7,8-tetrahydrofolate binding site.

The protein belongs to the thymidylate synthase family. Bacterial-type ThyA subfamily. As to quaternary structure, homodimer.

Its subcellular location is the cytoplasm. The catalysed reaction is dUMP + (6R)-5,10-methylene-5,6,7,8-tetrahydrofolate = 7,8-dihydrofolate + dTMP. The protein operates within pyrimidine metabolism; dTTP biosynthesis. In terms of biological role, catalyzes the reductive methylation of 2'-deoxyuridine-5'-monophosphate (dUMP) to 2'-deoxythymidine-5'-monophosphate (dTMP) while utilizing 5,10-methylenetetrahydrofolate (mTHF) as the methyl donor and reductant in the reaction, yielding dihydrofolate (DHF) as a by-product. This enzymatic reaction provides an intracellular de novo source of dTMP, an essential precursor for DNA biosynthesis. This Lactobacillus acidophilus (strain ATCC 700396 / NCK56 / N2 / NCFM) protein is Thymidylate synthase.